A 334-amino-acid polypeptide reads, in one-letter code: O-methyltransferase SfmM3 (334 aa).

Residues D190 and 216–218 contribute to the S-adenosyl-L-methionine site; that span reads GDF. H236 (proton acceptor) is an active-site residue.

This sequence belongs to the class I-like SAM-binding methyltransferase superfamily. Cation-independent O-methyltransferase family. COMT subfamily.

It carries out the reaction 5-hydroxy-3-methyl-L-tyrosine + S-adenosyl-L-methionine = 5-hydroxy-3-methyl-O-methyl-L-tyrosine + S-adenosyl-L-homocysteine + H(+). The protein operates within antibiotic biosynthesis. Its function is as follows. O-methyltransferase that mediates the methylation of 3-hydroxy-5-methyl-L-tyrosine (3-OH-5-Me-Tyr) into 3-hydroxy-5-methyl-O-methyltyrosine (3-OH-5-Me-OMe-Tyr), a core structure of saframycin A, a potent antitumor antibiotic that belongs to the tetrahydroisoquinoline family. The polypeptide is O-methyltransferase SfmM3 (Streptomyces lavendulae).